The chain runs to 225 residues: Octanoyltransferase (225 aa).

The BPL/LPL catalytic domain occupies Arg-44–Ile-219. Substrate-binding positions include Arg-83–His-90, Ser-150–Gly-152, and Gly-163–Ala-165. The active-site Acyl-thioester intermediate is the Cys-181.

This sequence belongs to the LipB family.

It localises to the cytoplasm. The catalysed reaction is octanoyl-[ACP] + L-lysyl-[protein] = N(6)-octanoyl-L-lysyl-[protein] + holo-[ACP] + H(+). The protein operates within protein modification; protein lipoylation via endogenous pathway; protein N(6)-(lipoyl)lysine from octanoyl-[acyl-carrier-protein]: step 1/2. Catalyzes the transfer of endogenously produced octanoic acid from octanoyl-acyl-carrier-protein onto the lipoyl domains of lipoate-dependent enzymes. Lipoyl-ACP can also act as a substrate although octanoyl-ACP is likely to be the physiological substrate. The polypeptide is Octanoyltransferase (Nitrosomonas eutropha (strain DSM 101675 / C91 / Nm57)).